We begin with the raw amino-acid sequence, 216 residues long: MKPLFISATGTGVGKSYTTQKLLQSLHQSGRKPLALKPIETGANPTPEDALLHLQLMQKLQLDQGLSLEEICLERYKLPASPWVSAKKEGRCVDVDHLLRRLLEFQKRSDPLLIEGAGGLLVPLLKEYFMIDLAEALEAHMVLVISGKLGGINEALLSLEALQHRQMSYTLVLNLWEEEKRSFEEISAPYWKERPERLFRLDSELEELTQTLLSAI.

12-17 (GVGKSY) contacts ATP. Ser16 is a binding site for Mg(2+). The active site involves Lys37. Thr41 lines the substrate pocket. Mg(2+)-binding residues include His53 and Glu115. Position 115 to 118 (115 to 118 (EGAG)) interacts with ATP.

This sequence belongs to the dethiobiotin synthetase family. Homodimer. The cofactor is Mg(2+).

It localises to the cytoplasm. The catalysed reaction is (7R,8S)-7,8-diammoniononanoate + CO2 + ATP = (4R,5S)-dethiobiotin + ADP + phosphate + 3 H(+). It functions in the pathway cofactor biosynthesis; biotin biosynthesis; biotin from 7,8-diaminononanoate: step 1/2. Functionally, catalyzes a mechanistically unusual reaction, the ATP-dependent insertion of CO2 between the N7 and N8 nitrogen atoms of 7,8-diaminopelargonic acid (DAPA, also called 7,8-diammoniononanoate) to form a ureido ring. The sequence is that of ATP-dependent dethiobiotin synthetase BioD from Wolinella succinogenes (strain ATCC 29543 / DSM 1740 / CCUG 13145 / JCM 31913 / LMG 7466 / NCTC 11488 / FDC 602W) (Vibrio succinogenes).